Here is a 556-residue protein sequence, read N- to C-terminus: Arginine--tRNA ligase (556 aa).

Residues 132 to 142 (ANPTGDLHLGH) carry the 'HIGH' region motif.

It belongs to the class-I aminoacyl-tRNA synthetase family. As to quaternary structure, monomer.

It localises to the cytoplasm. It carries out the reaction tRNA(Arg) + L-arginine + ATP = L-arginyl-tRNA(Arg) + AMP + diphosphate. The chain is Arginine--tRNA ligase from Listeria monocytogenes serotype 4a (strain HCC23).